The following is a 1088-amino-acid chain: RNA-directed RNA polymerase (1088 aa).

The RdRp catalytic domain occupies 501–687 (LSYGDVTRFL…AKRYLAGGKI (187 aa)).

It belongs to the reoviridae RNA-directed RNA polymerase family. In terms of assembly, interacts with VP3 (Potential). Interacts with VP2; this interaction activates VP1. Interacts with NSP5; this interaction is probably necessary for the formation of functional virus factories. Interacts with NSP2; this interaction is weak. The cofactor is Mg(2+).

Its subcellular location is the virion. The enzyme catalyses RNA(n) + a ribonucleoside 5'-triphosphate = RNA(n+1) + diphosphate. RNA-directed RNA polymerase that is involved in both transcription and genome replication. Together with VP3 capping enzyme, forms an enzyme complex positioned near the channels situated at each of the five-fold vertices of the core. Following infection, the outermost layer of the virus is lost, leaving a double-layered particle (DLP) made up of the core and VP6 shell. VP1 then catalyzes the transcription of fully conservative plus-strand genomic RNAs that are extruded through the DLP's channels into the cytoplasm where they function as mRNAs for translation of viral proteins. One copy of each of the viral (+)RNAs is also recruited during core assembly, together with newly synthesized polymerase complexes and VP2. The polymerase of these novo-formed particles catalyzes the synthesis of complementary minus-strands leading to dsRNA formation. To do so, the polymerase specifically recognizes and binds 4 bases 5'-UGUG-3' in the conserved 3'-sequence of plus-strand RNA templates. VP2 presumably activates the autoinhibited VP1-RNA complex to coordinate packaging and genome replication. Once dsRNA synthesis is complete, the polymerase switches to the transcriptional mode, thus providing secondary transcription. The protein is RNA-directed RNA polymerase of Rotavirus A (strain RVA/Human/Japan/KU/1995/G1P1A[8]) (RV-A).